A 186-amino-acid polypeptide reads, in one-letter code: Ribosome-recycling factor (186 aa).

The segment at 144–163 is disordered; the sequence is EKDGVIGQDESRAQSERVQK.

It belongs to the RRF family.

It localises to the cytoplasm. Responsible for the release of ribosomes from messenger RNA at the termination of protein biosynthesis. May increase the efficiency of translation by recycling ribosomes from one round of translation to another. This Rhizobium johnstonii (strain DSM 114642 / LMG 32736 / 3841) (Rhizobium leguminosarum bv. viciae) protein is Ribosome-recycling factor.